A 518-amino-acid chain; its full sequence is Voltage-gated potassium channel regulatory subunit KCNG2 (518 aa).

Topologically, residues 1–214 (MALLTGNADR…DMVENPHSGI (214 aa)) are cytoplasmic. The chain crosses the membrane as a helical span at residues 215–236 (PGKIFACISISFVAITAVSLCI). At 237 to 257 (STMPDVREEEDRGECSQKCYD) the chain is on the extracellular side. The helical transmembrane segment at 258–279 (IFVLETVCVAWFSFEFLLRSIQ) threads the bilayer. The Cytoplasmic segment spans residues 280 to 290 (AENKCAFLKTP). The chain crosses the membrane as a helical span at residues 291 to 311 (LNIIDILAILPFYISLIVDMA). Residues 312-331 (STKNSSKPGGGAGNKYLERV) lie on the Extracellular side of the membrane. The helical; Voltage-sensor transmembrane segment at 332–352 (GLVLRFLRALRILYVMRLARH) threads the bilayer. Topologically, residues 353–367 (SLGLQTLGLTVRRCT) are cytoplasmic. Residues 368 to 389 (REFGLLLLFLCVAMALFSPLVY) form a helical membrane-spanning segment. Over 390 to 404 (LAESELGAKQEFTSI) the chain is Extracellular. Residues 405–416 (PTSYWWAVISMT) constitute an intramembrane region (helical). The short motif at 417–422 (TVGYGD) is the Selectivity filter element. Residues 417-424 (TVGYGDMV) lie within the membrane without spanning it. Residues 425–431 (PRSIPGQ) lie on the Extracellular side of the membrane. The helical transmembrane segment at 432-460 (VVALSSILSGILLMAFPVTSIFHTFSRSY) threads the bilayer. At 461-518 (SELKEQQQRAASRQMHQLEESTKLAGGGSSQWITAASPPDAAREDGRPELDQEAKRSC) the chain is on the cytoplasmic side. The disordered stretch occupies residues 473–518 (RQMHQLEESTKLAGGGSSQWITAASPPDAAREDGRPELDQEAKRSC). Over residues 501-518 (AAREDGRPELDQEAKRSC) the composition is skewed to basic and acidic residues.

Belongs to the potassium channel family. G (TC 1.A.1.2) subfamily. Kv6.2/KCNG2 sub-subfamily. In terms of assembly, heterodimer with KCNB1.

It localises to the cell membrane. Regulatory alpha-subunit of the voltage-gated potassium (Kv) channel which, when coassembled with KCNB1, can modulate the kinetics and conductance-voltage relationship. Modulates channel activity by shifting the threshold and the half-maximal activation to more negative values. Potassium channel subunit that does not form functional channels by itself. The polypeptide is Voltage-gated potassium channel regulatory subunit KCNG2 (Gallus gallus (Chicken)).